Consider the following 395-residue polypeptide: Phosphopentomutase (395 aa).

Positions 14, 286, 291, 327, 328, and 339 each coordinate Mn(2+).

The protein belongs to the phosphopentomutase family. The cofactor is Mn(2+).

The protein resides in the cytoplasm. The catalysed reaction is 2-deoxy-alpha-D-ribose 1-phosphate = 2-deoxy-D-ribose 5-phosphate. The enzyme catalyses alpha-D-ribose 1-phosphate = D-ribose 5-phosphate. Its pathway is carbohydrate degradation; 2-deoxy-D-ribose 1-phosphate degradation; D-glyceraldehyde 3-phosphate and acetaldehyde from 2-deoxy-alpha-D-ribose 1-phosphate: step 1/2. Isomerase that catalyzes the conversion of deoxy-ribose 1-phosphate (dRib-1-P) and ribose 1-phosphate (Rib-1-P) to deoxy-ribose 5-phosphate (dRib-5-P) and ribose 5-phosphate (Rib-5-P), respectively. This chain is Phosphopentomutase, found in Staphylococcus haemolyticus (strain JCSC1435).